A 320-amino-acid chain; its full sequence is Methionyl-tRNA formyltransferase (320 aa).

Position 117 to 120 (117 to 120) interacts with (6S)-5,6,7,8-tetrahydrofolate; it reads SLLP.

It belongs to the Fmt family.

It carries out the reaction L-methionyl-tRNA(fMet) + (6R)-10-formyltetrahydrofolate = N-formyl-L-methionyl-tRNA(fMet) + (6S)-5,6,7,8-tetrahydrofolate + H(+). Attaches a formyl group to the free amino group of methionyl-tRNA(fMet). The formyl group appears to play a dual role in the initiator identity of N-formylmethionyl-tRNA by promoting its recognition by IF2 and preventing the misappropriation of this tRNA by the elongation apparatus. This chain is Methionyl-tRNA formyltransferase, found in Bordetella petrii (strain ATCC BAA-461 / DSM 12804 / CCUG 43448).